Consider the following 426-residue polypeptide: Methylamine dehydrogenase heavy chain (426 aa).

The signal sequence occupies residues 1–31 (MASARESTPRYLTLIGATLACSALALGAAQA). A disordered region spans residues 32 to 64 (QTEPAEPEAPAETAAADAAGQTEGQRGAAEAAA). Cys-221 and Cys-236 are disulfide-bonded.

Belongs to the aromatic amine dehydrogenase heavy chain family. Tetramer of two light and two heavy chains.

The protein resides in the periplasm. It carries out the reaction 2 oxidized [amicyanin] + methylamine + H2O = 2 reduced [amicyanin] + formaldehyde + NH4(+) + 2 H(+). In terms of biological role, methylamine dehydrogenase carries out the oxidation of methylamine. Electrons are passed from methylamine dehydrogenase to amicyanin. This chain is Methylamine dehydrogenase heavy chain (mauB), found in Paracoccus versutus (Thiobacillus versutus).